The chain runs to 299 residues: ATP phosphoribosyltransferase (299 aa).

Belongs to the ATP phosphoribosyltransferase family. Long subfamily. It depends on Mg(2+) as a cofactor.

It localises to the cytoplasm. It catalyses the reaction 1-(5-phospho-beta-D-ribosyl)-ATP + diphosphate = 5-phospho-alpha-D-ribose 1-diphosphate + ATP. It functions in the pathway amino-acid biosynthesis; L-histidine biosynthesis; L-histidine from 5-phospho-alpha-D-ribose 1-diphosphate: step 1/9. With respect to regulation, feedback inhibited by histidine. Catalyzes the condensation of ATP and 5-phosphoribose 1-diphosphate to form N'-(5'-phosphoribosyl)-ATP (PR-ATP). Has a crucial role in the pathway because the rate of histidine biosynthesis seems to be controlled primarily by regulation of HisG enzymatic activity. In Campylobacter jejuni subsp. jejuni serotype O:6 (strain 81116 / NCTC 11828), this protein is ATP phosphoribosyltransferase.